The chain runs to 91 residues: MVATNRCCVFALLFALLLVHSLTEAGKGKEILGKIKEKIIEAKDKMKAGWERLTSQSEYACPAIDKFCEDHCAAKKAVGKCDDFKCKCIKL.

The N-terminal stretch at 1–25 is a signal peptide; that stretch reads MVATNRCCVFALLFALLLVHSLTEA. Residues 26–42 constitute a propeptide that is removed on maturation; that stretch reads GKGKEILGKIKEKIIEA. The region spanning 58 to 91 is the BetaSPN-type CS-alpha/beta domain; it reads EYACPAIDKFCEDHCAAKKAVGKCDDFKCKCIKL. 3 disulfides stabilise this stretch: cysteine 61–cysteine 81, cysteine 68–cysteine 86, and cysteine 72–cysteine 88.

Belongs to the long chain scorpion toxin family. Class 2 subfamily. As to expression, expressed by the venom gland.

The protein resides in the secreted. Functionally, the full peptide presents antibacterial and cytotoxic activities. The synthetic C-terminus (AA 33-76) inhibits voltage-gated potassium channels Kv1.1/KCNA1, Kv1.2/KCNA2, and Kv1.3/KCNA3. The sequence is that of Potassium channel toxin TstKMK from Tityus stigmurus (Brazilian scorpion).